The primary structure comprises 467 residues: Keratin, type 1 cytoskeletal 11 (467 aa).

The tract at residues Met1–Ser100 is head. The segment covering Ser12–Ser30 has biased composition (low complexity). Positions Ser12–Leu32 are disordered. A coil 1A region spans residues Gly101–Tyr137. The IF rod domain occupies Gly101 to Ser413. Residues Glu138–Ile156 are linker 1. Residues Ala157–Arg248 form a coil 1B region. The tract at residues Ser249–Thr268 is linker 12. The segment at Lys269–Ser416 is coil 2. The segment at Asp409–Val430 is disordered. The segment at Ser417–Gln463 is tail.

Belongs to the intermediate filament family. As to quaternary structure, heterotetramer of two type I and two type II keratins. In terms of tissue distribution, expressed in the outermost cell layers of skin epidermis (at protein level).

In Protopterus aethiopicus (Marbled lungfish), this protein is Keratin, type 1 cytoskeletal 11.